The following is a 258-amino-acid chain: Isoprenyl transferase (258 aa).

Residue Asp-38 is part of the active site. Asp-38 lines the Mg(2+) pocket. Substrate contacts are provided by residues 39–42, Trp-43, Arg-51, His-55, and 83–85; these read GNGR and STE. Residue Asn-86 is the Proton acceptor of the active site. Residues Trp-87, Arg-89, Arg-206, and 212–214 contribute to the substrate site; that span reads RIS. A Mg(2+)-binding site is contributed by Glu-225.

Belongs to the UPP synthase family. Homodimer. The cofactor is Mg(2+).

Functionally, catalyzes the condensation of isopentenyl diphosphate (IPP) with allylic pyrophosphates generating different type of terpenoids. The chain is Isoprenyl transferase from Bacillus cereus (strain ATCC 10987 / NRS 248).